The following is a 997-amino-acid chain: Glutamate [NMDA] receptor subunit 1 (997 aa).

Residues 1-26 (MAVAGFVFCRPLFGLAIVLLVAPIDA) form the signal peptide. The Extracellular segment spans residues 27 to 573 (AQRHTASDNP…TLVSFLQPFS (547 aa)). 7 N-linked (GlcNAc...) asparagine glycosylation sites follow: N258, N314, N345, N397, N454, N481, and N501. Residues 530–532 (PLT) and R537 each bind glycine. The helical transmembrane segment at 574–594 (NTLWILVMVSVHVVALVLYLL) threads the bilayer. The Cytoplasmic segment spans residues 595–651 (DRFSPFGRFKLSHSDSNEEKALNLSSAVWFAWGVLLNSGIGEGTPRSFSARVLGMVW). The helical transmembrane segment at 652 to 672 (AGFAMIIVASYTANLAAFLVL) threads the bilayer. The Extracellular portion of the chain corresponds to 673–831 (ERPKTKLSGI…KTPNTLGLKN (159 aa)). A glycan (N-linked (GlcNAc...) asparagine) is linked at N693. Glycine-binding residues include S703 and D747. Residues 832–852 (MAGVFILVGVGIAGGVGLIII) form a helical membrane-spanning segment. The Cytoplasmic segment spans residues 853-997 (EVIYKKHQVK…YTSDVSHLVV (145 aa)). The disordered stretch occupies residues 970–997 (LGKTRPQQSVLPPRYSPGYTSDVSHLVV). A compositionally biased stretch (polar residues) spans 987 to 997 (GYTSDVSHLVV).

Belongs to the glutamate-gated ion channel (TC 1.A.10.1) family. Forms a heteromeric NMDA channel with Nmdar2.

The protein resides in the cell membrane. The protein localises to the postsynaptic cell membrane. Its subcellular location is the postsynaptic density. In terms of biological role, NMDA receptor subtype of glutamate-gated ion channels with high calcium permeability and voltage-dependent sensitivity to magnesium. Mediated by glycine. This protein plays a key role in synaptic plasticity, synaptogenesis, excitotoxicity, memory acquisition and learning. It mediates neuronal functions in glutamate neurotransmission. Is involved in the cell surface targeting of NMDA receptors. Plays a role in associative learning and in long-term memory consolidation. The sequence is that of Glutamate [NMDA] receptor subunit 1 from Drosophila sechellia (Fruit fly).